Consider the following 151-residue polypeptide: UPF0208 membrane protein YfbV (151 aa).

The next 2 membrane-spanning stretches (helical) occupy residues 46–65 and 69–91; these read YAIR…QIAL and LGPA…WWLG.

It belongs to the UPF0208 family.

The protein resides in the cell inner membrane. This chain is UPF0208 membrane protein YfbV, found in Shigella flexneri serotype 5b (strain 8401).